The following is a 108-amino-acid chain: Parvalbumin beta (108 aa).

EF-hand domains lie at lysine 38–threonine 73 and leucine 77–alanine 108. Ca(2+) contacts are provided by aspartate 51, aspartate 53, serine 55, phenylalanine 57, glutamate 59, glutamate 62, aspartate 90, aspartate 92, aspartate 94, lysine 96, and glutamate 101.

It belongs to the parvalbumin family.

In muscle, parvalbumin is thought to be involved in relaxation after contraction. It binds two calcium ions. The polypeptide is Parvalbumin beta (Graptemys geographica (Common map turtle)).